A 237-amino-acid polypeptide reads, in one-letter code: (5-formylfuran-3-yl)methyl phosphate synthase (237 aa).

K29 serves as the catalytic Schiff-base intermediate with substrate. The active-site Proton acceptor is K87.

This sequence belongs to the MfnB family.

It carries out the reaction 2 D-glyceraldehyde 3-phosphate = 4-(hydroxymethyl)-2-furancarboxaldehyde phosphate + phosphate + 2 H2O. Its pathway is cofactor biosynthesis; methanofuran biosynthesis. In terms of biological role, catalyzes the formation of 4-(hydroxymethyl)-2-furancarboxaldehyde phosphate (4-HFC-P) from two molecules of glyceraldehyde-3-P (GA-3-P). This chain is (5-formylfuran-3-yl)methyl phosphate synthase, found in Methanopyrus kandleri (strain AV19 / DSM 6324 / JCM 9639 / NBRC 100938).